The chain runs to 152 residues: Small ribosomal subunit protein uS15 (152 aa).

Positions 1 to 19 are enriched in basic residues; sequence MAKMHTRRKGRSRSTRPVR. The tract at residues 1-21 is disordered; that stretch reads MAKMHTRRKGRSRSTRPVRKT.

This sequence belongs to the universal ribosomal protein uS15 family. In terms of assembly, part of the 30S ribosomal subunit.

The protein is Small ribosomal subunit protein uS15 of Methanocella arvoryzae (strain DSM 22066 / NBRC 105507 / MRE50).